The primary structure comprises 196 residues: Small ribosomal subunit protein uS4c (196 aa).

Positions 15-36 (LGTLPGLTSKRPRSGSDLKNPL) are disordered. One can recognise an S4 RNA-binding domain in the interval 89–150 (MRLDNILFRL…KQRSKALIQN (62 aa)).

The protein belongs to the universal ribosomal protein uS4 family. In terms of assembly, part of the 30S ribosomal subunit. Contacts protein S5. The interaction surface between S4 and S5 is involved in control of translational fidelity.

It is found in the plastid. It localises to the chloroplast. Its function is as follows. One of the primary rRNA binding proteins, it binds directly to 16S rRNA where it nucleates assembly of the body of the 30S subunit. In terms of biological role, with S5 and S12 plays an important role in translational accuracy. In Yucca filamentosa (Bear-grass), this protein is Small ribosomal subunit protein uS4c (rps4).